The chain runs to 419 residues: GTPase Obg (419 aa).

The region spanning 1–158 is the Obg domain; sequence MIFIDTAEII…RRLRLELKLV (158 aa). In terms of domain architecture, OBG-type G spans 159 to 328; the sequence is AHVGLVGLPN…LVDVLFELIS (170 aa). GTP contacts are provided by residues 165–172, 190–194, 211–214, 281–284, and 309–311; these read GLPNAGKS, FTTRS, DVPG, NKID, and SAA. Residues Ser-172 and Thr-192 each coordinate Mg(2+). The 76-residue stretch at 344–419 folds into the OCT domain; the sequence is ELPPLPEDFS…VIHDKAFEIL (76 aa).

It belongs to the TRAFAC class OBG-HflX-like GTPase superfamily. OBG GTPase family. In terms of assembly, monomer. It depends on Mg(2+) as a cofactor.

The protein localises to the cytoplasm. In terms of biological role, an essential GTPase which binds GTP, GDP and possibly (p)ppGpp with moderate affinity, with high nucleotide exchange rates and a fairly low GTP hydrolysis rate. Plays a role in control of the cell cycle, stress response, ribosome biogenesis and in those bacteria that undergo differentiation, in morphogenesis control. This Coprothermobacter proteolyticus (strain ATCC 35245 / DSM 5265 / OCM 4 / BT) protein is GTPase Obg.